The chain runs to 485 residues: NADH-quinone oxidoreductase subunit N (485 aa).

A run of 14 helical transmembrane segments spans residues 8 to 28, 35 to 55, 75 to 95, 105 to 125, 127 to 147, 159 to 179, 203 to 223, 235 to 255, 271 to 291, 297 to 317, 326 to 346, 374 to 394, 408 to 430, and 455 to 475; these read LIAL…MLSI, FLNA…LWFV, LYTG…YPWL, FYLL…ANHL, ALFL…GYAF, YTIL…LVYA, LLAG…LVPF, PAPV…GVVM, VVLG…ALSQ, LLGY…IALQ, VGVY…VVSL, AVMT…GFIG, WWLV…RVAV, and IVVL…QPLI.

Belongs to the complex I subunit 2 family. NDH-1 is composed of 13 different subunits. Subunits NuoA, H, J, K, L, M, N constitute the membrane sector of the complex.

Its subcellular location is the cell inner membrane. The catalysed reaction is a quinone + NADH + 5 H(+)(in) = a quinol + NAD(+) + 4 H(+)(out). NDH-1 shuttles electrons from NADH, via FMN and iron-sulfur (Fe-S) centers, to quinones in the respiratory chain. The immediate electron acceptor for the enzyme in this species is believed to be ubiquinone. Couples the redox reaction to proton translocation (for every two electrons transferred, four hydrogen ions are translocated across the cytoplasmic membrane), and thus conserves the redox energy in a proton gradient. The chain is NADH-quinone oxidoreductase subunit N from Klebsiella pneumoniae subsp. pneumoniae (strain ATCC 700721 / MGH 78578).